The following is an 820-amino-acid chain: MAITRRSFLKGVATTSAASVIGPSLLASASANAVETTGTWKVSGSHWGAFRAHIYAGKVQEIKPIELDQNPTEMLNGIKGIIYSPSRVRYPMVRLDWLKKHKYSADTRGNNRFVRVTWDEALDLFYRELERVQKEYGPWALHAGQTGWNQTGSFNNCTAHMQRAVGMHGNYITKVGDYSTGAGQTILPYVLGSTEVYAQGTSWSEILENADNIILWANDPVKNLQVGWNCETHESYAYLAQLKEKVAKGEINVISVDPVKNKTQRYLENDHLYVNPMTDVPFMLAIAHVLYTENLYDKKFIETYCLGFEEFINYVQGKTKDKVEKTPEWAAPICGVKADKIREFARMLVKGRTQILMGWCIQRQEHGEQPYWAAAVVAAMIGQIGLPGGGISYGHHYSSIGVPSTGFAGPGGFPRNLDAGMKPKWDNNDFNGYSRTIPVARWIDCLLEPGKEINYNGGKVKLPDFKMMVISGCNPWHHHQDRNRMKQAFQKLQTVVTIDFAWTATCRFSDIVLPACTQWERNDIDVYGSYSSRGLIAMHRLVDPLFQSKPDFQIMKELTERFGRSEEYSRGMSEMDWIRSLYNDCKKSNEGKFEMPEFDEFWEKSVLDFGQGQPWVRHADFRQDPEINPLGTPSGFIEITSRKIGRYGYEHCQEHPMWFEKSERSHGGPGSDKHPFWLQSCHPDKRLHSQMCESEEFRATYAVKGREPVYINPLDAKAKGIKEGDLVRVFNDRGQLLAGAVLTDSYPRGVIRIEEGAWYGPLNEKVGAIDTYGDPNTLTQDIGSSELAQATSANTCIVDFEKFTGKVPPVTSFGGPIEVA.

A signal peptide (tat-type signal) is located at residues 1–33 (MAITRRSFLKGVATTSAASVIGPSLLASASANA). Residue Ser-179 participates in Mo-bis(molybdopterin guanine dinucleotide) binding.

This sequence belongs to the prokaryotic molybdopterin-containing oxidoreductase family. The cofactor is Mo-bis(molybdopterin guanine dinucleotide). Post-translationally, predicted to be exported by the Tat system. The position of the signal peptide cleavage has not been experimentally proven.

Its subcellular location is the periplasm. The catalysed reaction is trimethylamine + 2 Fe(III)-[cytochrome c] + H2O = trimethylamine N-oxide + 2 Fe(II)-[cytochrome c] + 3 H(+). Functionally, reduces trimethylamine-N-oxide (TMAO) into trimethylamine; an anaerobic reaction coupled to energy-yielding reactions. This chain is Trimethylamine-N-oxide reductase (torA), found in Vibrio vulnificus (strain CMCP6).